The primary structure comprises 387 residues: tRNA-specific 2-thiouridylase MnmA (387 aa).

Residues 34–41 and M60 each bind ATP; that span reads AMSGGVDS. Residue C127 is the Nucleophile of the active site. The cysteines at positions 127 and 223 are disulfide-linked. G151 provides a ligand contact to ATP. The interval 173–175 is interaction with tRNA; sequence KDQ. The active-site Cysteine persulfide intermediate is C223.

Belongs to the MnmA/TRMU family.

It localises to the cytoplasm. The enzyme catalyses S-sulfanyl-L-cysteinyl-[protein] + uridine(34) in tRNA + AH2 + ATP = 2-thiouridine(34) in tRNA + L-cysteinyl-[protein] + A + AMP + diphosphate + H(+). In terms of biological role, catalyzes the 2-thiolation of uridine at the wobble position (U34) of tRNA, leading to the formation of s(2)U34. The chain is tRNA-specific 2-thiouridylase MnmA from Anaplasma marginale (strain St. Maries).